A 618-amino-acid polypeptide reads, in one-letter code: MSSIEEQITKSDSDFIISEDQSYLSKEKKADGSATINTADEQSSTDELQKSMSTGVLVNGDLYPSPTEEELATLPRVCGTIPWKAFIIIIVELCERFAYYGLTVPFQNYMQFGPKDATPGALNLGESGADGLSNFFTFWCYVTPVGAALIADQFLGRYNTIVCSAVIYFIGILILTCTAIPSVIDAGKSMGGFVVSLIIIGLGTGGIKSNVSPLMAEQLPKIPPYVKTKKNGSKVIVDPVVTTSRAYMIFYWSINVGSLSVLATTSLESTKGFVYAYLLPLCVFVIPLIILAVSKRFYKHTPPSGSIFVRVGQVFFLAAQNKFNLEKTKPSCTTTVGRVTLKDQWDDLFIDELKRALRACKTFLFYPIYWVCYGQMTNNLISQAGQMQTGNVSNDLFQAFDSIALIIFIPICDNIIYPLLRKYNIPFKPILRITLGFMFATASMIYAAVLQAKIYQRGPCYANFTDTCVSNDISVWIQIPAYVLIAFSEIFASITGLEFAFTKAPPSMKSIITALFLFTNAFGAILSICISSTAVNPKLTWMYTGIAVTAFIAGIMFWVCFHHYDAMEDEQNQLEFKRNDALTKKDVEKEVHDSYSMADESQYNLEKATAEEEIMKST.

Phosphoserine is present on serine 22. The residue at position 23 (tyrosine 23) is a Phosphotyrosine. 2 positions are modified to phosphoserine: serine 25 and serine 33. The segment at 26 to 50 (KEKKADGSATINTADEQSSTDELQK) is disordered. Over residues 34-50 (ATINTADEQSSTDELQK) the composition is skewed to polar residues. A Phosphothreonine modification is found at threonine 35. Serine 44 is modified (phosphoserine). The residue at position 45 (threonine 45) is a Phosphothreonine. Phosphoserine occurs at positions 51 and 53. Threonine 54 is subject to Phosphothreonine. Transmembrane regions (helical) follow at residues 131-151 (GLSN…ALIA), 161-181 (IVCS…TAIP), 187-207 (GKSM…TGGI), 247-267 (YMIF…TTSL), 273-293 (FVYA…ILAV), 400-420 (FDSI…YPLL), 430-450 (ILRI…AAVL), 475-495 (VWIQ…ASIT), 510-530 (SIIT…SICI), and 541-561 (WMYT…WVCF). Phosphoserine is present on serine 594. Residue threonine 618 is modified to Phosphothreonine.

The protein belongs to the major facilitator superfamily. Proton-dependent oligopeptide transporter (POT/PTR) (TC 2.A.17) family.

Its subcellular location is the membrane. Functionally, uptake of small peptides. This is Probable peptide transporter ptr2 (ptr2) from Schizosaccharomyces pombe (strain 972 / ATCC 24843) (Fission yeast).